The primary structure comprises 1058 residues: Leucine-rich repeat and coiled-coil domain-containing protein PF3D7_0703800 (1058 aa).

Residues 1 to 10 (MAIKKKKKET) show a composition bias toward basic residues. Residues 1–34 (MAIKKKKKETKSKDNNNDNLRNEKKSTNLENGKY) form a disordered region. The span at 11-34 (KSKDNNNDNLRNEKKSTNLENGKY) shows a compositional bias: basic and acidic residues. Positions 515–544 (LKQLYTFIKNYENNNDKLNIKSQIINKDKN) form a coiled coil. The span at 641–661 (ENKDHLQHEEHTHEEEPKDAN) shows a compositional bias: basic and acidic residues. 2 disordered regions span residues 641–665 (ENKD…GDMV) and 706–728 (NIED…ENMK). Residues 872–905 (NYDHTQENILKNKNNMEDQNNLLEQNIMTDQLQN) are a coiled coil.

In Plasmodium falciparum (isolate 3D7), this protein is Leucine-rich repeat and coiled-coil domain-containing protein PF3D7_0703800.